A 264-amino-acid chain; its full sequence is Putative hydro-lyase Bpet2233 (264 aa).

The protein belongs to the D-glutamate cyclase family.

The protein is Putative hydro-lyase Bpet2233 of Bordetella petrii (strain ATCC BAA-461 / DSM 12804 / CCUG 43448).